A 224-amino-acid chain; its full sequence is UPF0758 protein PBPRA0202 (224 aa).

In terms of domain architecture, MPN spans valine 102–leucine 224. Histidine 173, histidine 175, and aspartate 186 together coordinate Zn(2+). The JAMM motif motif lies at histidine 173–aspartate 186.

This sequence belongs to the UPF0758 family.

This chain is UPF0758 protein PBPRA0202, found in Photobacterium profundum (strain SS9).